Reading from the N-terminus, the 498-residue chain is Putative antiporter subunit mnhD2 (498 aa).

Helical transmembrane passes span 2–22 (LSNL…ILVF), 32–52 (YLYL…LIYV), 78–98 (LSLI…AYGF), 108–128 (YHLP…FLTS), 130–150 (LFNL…LITL), 161–181 (IIYV…IGLL), 209–229 (ISLI…FMWL), 240–260 (LAAL…IRFF), 271–291 (IHPL…IGVI), 308–328 (IGFI…GAIF), 330–350 (LVND…LVYI), 369–389 (FGVA…FSGF), 406–426 (IGLA…FRIF), and 451–471 (ILSI…VVLN).

Belongs to the CPA3 antiporters (TC 2.A.63) subunit D family. As to quaternary structure, may form a heterooligomeric complex that consists of seven subunits: mnhA2, mnhB2, mnhC2, mnhD2, mnhE2, mnhF2 and mnhG2.

Its subcellular location is the cell membrane. This chain is Putative antiporter subunit mnhD2 (mnhD2), found in Staphylococcus aureus (strain Mu3 / ATCC 700698).